Here is a 182-residue protein sequence, read N- to C-terminus: Transcription termination/antitermination protein NusG (182 aa).

The 33-residue stretch at 131 to 163 folds into the KOW domain; sequence VGEQVRIQSGPFANQIGEVQEIEADKFKLTVLV.

This sequence belongs to the NusG family.

Its function is as follows. Participates in transcription elongation, termination and antitermination. This is Transcription termination/antitermination protein NusG from Staphylococcus epidermidis (strain ATCC 35984 / DSM 28319 / BCRC 17069 / CCUG 31568 / BM 3577 / RP62A).